We begin with the raw amino-acid sequence, 290 residues long: Agroclavine dehydrogenase (290 aa).

It belongs to the fgaFS/easG family. Monomer.

It carries out the reaction agroclavine + NADP(+) = didehydroagroclavine + NADPH + H(+). It functions in the pathway alkaloid biosynthesis; ergot alkaloid biosynthesis. Functionally, agroclavine dehydrogenase; part of the gene cluster that mediates the biosynthesis of fungal ergot alkaloid. DmaW catalyzes the first step of ergot alkaloid biosynthesis by condensing dimethylallyl diphosphate (DMAP) and tryptophan to form 4-dimethylallyl-L-tryptophan. The second step is catalyzed by the methyltransferase easF that methylates 4-dimethylallyl-L-tryptophan in the presence of S-adenosyl-L-methionine, resulting in the formation of 4-dimethylallyl-L-abrine. The catalase easC and the FAD-dependent oxidoreductase easE then transform 4-dimethylallyl-L-abrine to chanoclavine-I which is further oxidized by easD in the presence of NAD(+), resulting in the formation of chanoclavine-I aldehyde. Agroclavine dehydrogenase easG then mediates the conversion of chanoclavine-I aldehyde to agroclavine via a non-enzymatic adduct reaction: the substrate is an iminium intermediate that is formed spontaneously from chanoclavine-I aldehyde in the presence of glutathione. The presence of easA is not required to complete this reaction. Further conversion of agroclavine to paspalic acid is a two-step process involving oxidation of agroclavine to elymoclavine and of elymoclavine to paspalic acid, the second step being performed by the elymoclavine oxidase cloA. Paspalic acid is then further converted to D-lysergic acid. Ergopeptines are assembled from D-lysergic acid and three different amino acids by the D-lysergyl-peptide-synthetases composed each of a monomudular and a trimodular nonribosomal peptide synthetase subunit. LpsB and lpsC encode the monomodular subunits responsible for D-lysergic acid activation and incorporation into the ergopeptine backbone. LpsA1 and A2 subunits encode the trimodular nonribosomal peptide synthetase assembling the tripeptide portion of ergopeptines. LpsA1 is responsible for formation of the major ergopeptine, ergotamine, and lpsA2 for alpha-ergocryptine, the minor ergopeptine of the total alkaloid mixture elaborated by C.purpurea. D-lysergyl-tripeptides are assembled by the nonribosomal peptide synthetases and released as N-(D-lysergyl-aminoacyl)-lactams. Cyclolization of the D-lysergyl-tripeptides is performed by the Fe(2+)/2-ketoglutarate-dependent dioxygenase easH which introduces a hydroxyl group into N-(D-lysergyl-aminoacyl)-lactam at alpha-C of the aminoacyl residue followed by spontaneous condensation with the terminal lactam carbonyl group. The chain is Agroclavine dehydrogenase from Claviceps purpurea (strain 20.1) (Ergot fungus).